A 623-amino-acid polypeptide reads, in one-letter code: Serine/threonine-protein kinase ArnS (623 aa).

2 consecutive transmembrane segments (helical) span residues 13–33 and 49–69; these read MILI…GIVL and VYLI…QSLI. The Protein kinase domain maps to 317–623; that stretch reads YRVIEVIGLG…SYDIVKILEG (307 aa). ATP is bound by residues 323 to 331 and Lys344; that span reads IGLGGNGYV. Asp460 (proton acceptor) is an active-site residue.

It belongs to the protein kinase superfamily. Ser/Thr protein kinase family. Autophosphorylated.

It is found in the cell membrane. It catalyses the reaction L-seryl-[protein] + ATP = O-phospho-L-seryl-[protein] + ADP + H(+). It carries out the reaction L-threonyl-[protein] + ATP = O-phospho-L-threonyl-[protein] + ADP + H(+). With respect to regulation, autophosphorylation is stimulated by Mn(2+). In terms of biological role, plays an essential role in the controlled expression of archaellum components during starvation-induced motility. May inhibit arnR transcription and promote ArnR translation. This Sulfolobus acidocaldarius (strain ATCC 33909 / DSM 639 / JCM 8929 / NBRC 15157 / NCIMB 11770) protein is Serine/threonine-protein kinase ArnS.